Reading from the N-terminus, the 236-residue chain is Ribose-5-phosphate isomerase A (236 aa).

Residues 28-31 (TGST), 83-86 (DGAD), and 96-99 (KGGG) each bind substrate. E105 acts as the Proton acceptor in catalysis. Substrate is bound at residue K123.

Belongs to the ribose 5-phosphate isomerase family. As to quaternary structure, homodimer.

The catalysed reaction is aldehydo-D-ribose 5-phosphate = D-ribulose 5-phosphate. It participates in carbohydrate degradation; pentose phosphate pathway; D-ribose 5-phosphate from D-ribulose 5-phosphate (non-oxidative stage): step 1/1. Functionally, catalyzes the reversible conversion of ribose-5-phosphate to ribulose 5-phosphate. This chain is Ribose-5-phosphate isomerase A, found in Afipia carboxidovorans (strain ATCC 49405 / DSM 1227 / KCTC 32145 / OM5) (Oligotropha carboxidovorans).